The chain runs to 374 residues: Fatty acid conjugase FAC2 A (374 aa).

The next 2 membrane-spanning stretches (helical) occupy residues 50-70 and 74-94; these read IIVT…LPGF and IVWP…WMIG. The Histidine box-1 motif lies at 95–99; sequence HECGH. The Histidine box-2 signature appears at 131 to 135; that stretch reads HRNHH. A run of 3 helical transmembrane segments spans residues 168–188, 219–239, and 246–266; these read MGLM…YIMF, VLFS…IVMV, and FYVY…ATYL. Residues 306-310 carry the Histidine box-3 motif; sequence HVIHH.

This sequence belongs to the fatty acid desaturase type 1 family. As to expression, expressed exclusively in the developing seeds. Not detected in leaves or flower buds.

Its subcellular location is the microsome membrane. The enzyme catalyses a (9Z,12Z)-octadecadienoyl-containing glycerolipid + AH2 + O2 = a (8E,10E,12Z)-octadecatrienoyl-containing glycerolipid + A + 2 H2O. It participates in lipid metabolism; polyunsaturated fatty acid biosynthesis. Fatty acid conjugase converting 18:2(9Z, 12Z) to calendic acid 18:3(8E, 10E, 12Z). Converts alpha-linolenic acid (18:3(9Z, 12Z, 15Z)) into 18:4(8E, 10E, 12Z, 15Z). Also has weak activity on the mono-unsaturates 16:1(9Z) and 18:1(9Z) producing two conjugated double bonds at delta(8) and delta(10) position. The chain is Fatty acid conjugase FAC2 A from Calendula officinalis (Pot marigold).